The primary structure comprises 513 residues: ATP synthase subunit alpha (513 aa).

169–176 contributes to the ATP binding site; the sequence is GDRQTGKT.

Belongs to the ATPase alpha/beta chains family. As to quaternary structure, F-type ATPases have 2 components, CF(1) - the catalytic core - and CF(0) - the membrane proton channel. CF(1) has five subunits: alpha(3), beta(3), gamma(1), delta(1), epsilon(1). CF(0) has three main subunits: a(1), b(2) and c(9-12). The alpha and beta chains form an alternating ring which encloses part of the gamma chain. CF(1) is attached to CF(0) by a central stalk formed by the gamma and epsilon chains, while a peripheral stalk is formed by the delta and b chains.

Its subcellular location is the cell inner membrane. It carries out the reaction ATP + H2O + 4 H(+)(in) = ADP + phosphate + 5 H(+)(out). Its function is as follows. Produces ATP from ADP in the presence of a proton gradient across the membrane. The alpha chain is a regulatory subunit. The protein is ATP synthase subunit alpha of Salmonella agona (strain SL483).